Consider the following 466-residue polypeptide: Asparagine--tRNA ligase (466 aa).

It belongs to the class-II aminoacyl-tRNA synthetase family. As to quaternary structure, homodimer.

It localises to the cytoplasm. It carries out the reaction tRNA(Asn) + L-asparagine + ATP = L-asparaginyl-tRNA(Asn) + AMP + diphosphate + H(+). This Photorhabdus laumondii subsp. laumondii (strain DSM 15139 / CIP 105565 / TT01) (Photorhabdus luminescens subsp. laumondii) protein is Asparagine--tRNA ligase.